A 440-amino-acid polypeptide reads, in one-letter code: Transposon Ty1-GR1 Gag polyprotein (440 aa).

Low complexity predominate over residues 1–16 (MESQQLSQHSHISHGS). Disordered stretches follow at residues 1 to 93 (MESQ…MMTQ), 126 to 173 (PQSQ…RPPP), and 352 to 440 (GSRN…PGTY). 3 stretches are compositionally biased toward polar residues: residues 48–60 (TKANSQQTTTPAS), 71–93 (SPQTAQSHSPQNGPYPQQCMMTQ), and 127–152 (QSQFPQYPSSVGTPLSTPSPESGNTF). The segment covering 153-165 (TDSSSADSDMTST) has biased composition (low complexity). The segment at 299 to 401 (NNGIHINNKV…NSKSKTARAH (103 aa)) is RNA-binding. The span at 402–418 (NVSTSNNSPSTDNDSIS) shows a compositional bias: low complexity. Ser416 carries the phosphoserine modification. Residues 419-428 (KSTTEPIQLN) show a composition bias toward polar residues. A compositionally biased stretch (basic and acidic residues) spans 429 to 440 (NKHDLHLRPGTY).

Homotrimer.

The protein localises to the cytoplasm. Capsid protein (CA) is the structural component of the virus-like particle (VLP), forming the shell that encapsulates the retrotransposons dimeric RNA genome. The particles are assembled from trimer-clustered units and there are holes in the capsid shells that allow for the diffusion of macromolecules. CA also has nucleocapsid-like chaperone activity, promoting primer tRNA(i)-Met annealing to the multipartite primer-binding site (PBS), dimerization of Ty1 RNA and initiation of reverse transcription. In Saccharomyces cerevisiae (strain ATCC 204508 / S288c) (Baker's yeast), this protein is Transposon Ty1-GR1 Gag polyprotein (TY1A-GR1).